Here is a 321-residue protein sequence, read N- to C-terminus: ATP-dependent 6-phosphofructokinase (321 aa).

Position 11 (Gly11) interacts with ATP. Position 21–25 (21–25 (RAVVR)) interacts with ADP. ATP contacts are provided by residues 72-73 (RC) and 102-105 (GDGS). Asp103 provides a ligand contact to Mg(2+). 126–128 (TID) contacts substrate. The active-site Proton acceptor is Asp128. Arg155 serves as a coordination point for ADP. Residues Arg163 and 170–172 (MGR) contribute to the substrate site. ADP contacts are provided by residues 186-188 (GAE), Arg212, and 214-216 (KLH). Residues Glu223, Arg245, and 251–254 (HIQR) contribute to the substrate site.

Belongs to the phosphofructokinase type A (PFKA) family. ATP-dependent PFK group I subfamily. Prokaryotic clade 'B1' sub-subfamily. In terms of assembly, homotetramer. Mg(2+) is required as a cofactor.

It localises to the cytoplasm. It catalyses the reaction beta-D-fructose 6-phosphate + ATP = beta-D-fructose 1,6-bisphosphate + ADP + H(+). It functions in the pathway carbohydrate degradation; glycolysis; D-glyceraldehyde 3-phosphate and glycerone phosphate from D-glucose: step 3/4. Its activity is regulated as follows. Allosterically activated by ADP and other diphosphonucleosides, and allosterically inhibited by phosphoenolpyruvate. Functionally, catalyzes the phosphorylation of D-fructose 6-phosphate to fructose 1,6-bisphosphate by ATP, the first committing step of glycolysis. This is ATP-dependent 6-phosphofructokinase from Thermoanaerobacter pseudethanolicus (strain ATCC 33223 / 39E) (Clostridium thermohydrosulfuricum).